Reading from the N-terminus, the 237-residue chain is Ribosomal RNA small subunit methyltransferase G (237 aa).

S-adenosyl-L-methionine contacts are provided by residues G72, L77, 123–124 (AE), and R138. Residues 210 to 237 (TALETGTKAAPSRSPRKPGGRKKRGRKR) form a disordered region. The span at 223 to 237 (SPRKPGGRKKRGRKR) shows a compositional bias: basic residues.

The protein belongs to the methyltransferase superfamily. RNA methyltransferase RsmG family.

It localises to the cytoplasm. In terms of biological role, specifically methylates the N7 position of guanine in position 518 of 16S rRNA. The protein is Ribosomal RNA small subunit methyltransferase G of Thermobifida fusca (strain YX).